Consider the following 500-residue polypeptide: L-arabinose isomerase (500 aa).

The Mn(2+) site is built by E306, E333, H350, and H450.

The protein belongs to the arabinose isomerase family. In terms of assembly, homohexamer. It depends on Mn(2+) as a cofactor.

The enzyme catalyses beta-L-arabinopyranose = L-ribulose. It participates in carbohydrate degradation; L-arabinose degradation via L-ribulose; D-xylulose 5-phosphate from L-arabinose (bacterial route): step 1/3. In terms of biological role, catalyzes the conversion of L-arabinose to L-ribulose. This is L-arabinose isomerase from Escherichia coli O139:H28 (strain E24377A / ETEC).